Consider the following 60-residue polypeptide: Large ribosomal subunit protein bL32 (60 aa).

The protein belongs to the bacterial ribosomal protein bL32 family.

The polypeptide is Large ribosomal subunit protein bL32 (Desulfovibrio desulfuricans (strain ATCC 27774 / DSM 6949 / MB)).